The sequence spans 323 residues: GTP 3',8-cyclase (323 aa).

Positions 4–233 (KYGREIDYLR…NGPAKYISIE (230 aa)) constitute a Radical SAM core domain. R13 contacts GTP. Residues C20 and C24 each coordinate [4Fe-4S] cluster. Y26 contacts S-adenosyl-L-methionine. A [4Fe-4S] cluster-binding site is contributed by C27. R63 lines the GTP pocket. G67 serves as a coordination point for S-adenosyl-L-methionine. T94 is a binding site for GTP. An S-adenosyl-L-methionine-binding site is contributed by S118. Position 154 (K154) interacts with GTP. Position 188 (M188) interacts with S-adenosyl-L-methionine. 2 residues coordinate [4Fe-4S] cluster: C250 and C253. 255–257 (RIR) contributes to the GTP binding site. C267 is a binding site for [4Fe-4S] cluster.

The protein belongs to the radical SAM superfamily. MoaA family. Monomer and homodimer. The cofactor is [4Fe-4S] cluster.

It catalyses the reaction GTP + AH2 + S-adenosyl-L-methionine = (8S)-3',8-cyclo-7,8-dihydroguanosine 5'-triphosphate + 5'-deoxyadenosine + L-methionine + A + H(+). It functions in the pathway cofactor biosynthesis; molybdopterin biosynthesis. Functionally, catalyzes the cyclization of GTP to (8S)-3',8-cyclo-7,8-dihydroguanosine 5'-triphosphate. The protein is GTP 3',8-cyclase of Clostridium perfringens (strain 13 / Type A).